A 166-amino-acid polypeptide reads, in one-letter code: Coiled-coil domain-containing protein 12 (166 aa).

N-acetylmethionine is present on M1. The disordered stretch occupies residues 1–56 (MEATTAGVGRLEEEALRRKERLKALREKTGRKDKEDGEPKTKHLREEEEEGEKHRE). The stretch at 8-28 (VGRLEEEALRRKERLKALREK) forms a coiled coil. The segment covering 10 to 56 (RLEEEALRRKERLKALREKTGRKDKEDGEPKTKHLREEEEEGEKHRE) has biased composition (basic and acidic residues). K53 is modified (N6-acetyllysine). K94 is covalently cross-linked (Glycyl lysine isopeptide (Lys-Gly) (interchain with G-Cter in SUMO2)). Residues 117-144 (KRDVAKKLEKLKKRTQRAIAELIRERLK) adopt a coiled-coil conformation. The segment at 147–166 (EDSLASAVDAATEQKTCDSD) is disordered. Residues S149 and S165 each carry the phosphoserine modification.

The sequence is that of Coiled-coil domain-containing protein 12 (CCDC12) from Homo sapiens (Human).